The primary structure comprises 135 residues: Ribonuclease P protein component (135 aa).

This sequence belongs to the RnpA family. Consists of a catalytic RNA component (M1 or rnpB) and a protein subunit.

The enzyme catalyses Endonucleolytic cleavage of RNA, removing 5'-extranucleotides from tRNA precursor.. In terms of biological role, RNaseP catalyzes the removal of the 5'-leader sequence from pre-tRNA to produce the mature 5'-terminus. It can also cleave other RNA substrates such as 4.5S RNA. The protein component plays an auxiliary but essential role in vivo by binding to the 5'-leader sequence and broadening the substrate specificity of the ribozyme. The protein is Ribonuclease P protein component of Pseudomonas aeruginosa (strain LESB58).